A 120-amino-acid chain; its full sequence is Glycine cleavage system H protein (120 aa).

The Lipoyl-binding domain maps to 17–99 (IATVGITSHA…QGAGWLYRMR (83 aa)). N6-lipoyllysine is present on Lys58.

It belongs to the GcvH family. As to quaternary structure, the glycine cleavage system is composed of four proteins: P, T, L and H. (R)-lipoate serves as cofactor.

Its function is as follows. The glycine cleavage system catalyzes the degradation of glycine. The H protein shuttles the methylamine group of glycine from the P protein to the T protein. The chain is Glycine cleavage system H protein from Methylobacterium nodulans (strain LMG 21967 / CNCM I-2342 / ORS 2060).